Reading from the N-terminus, the 480-residue chain is tRNA-2-methylthio-N(6)-dimethylallyladenosine synthase (480 aa).

Positions 25-145 (GVFYVHTLGC…LPQLLDQARI (121 aa)) constitute an MTTase N-terminal domain. Residues Cys34, Cys74, Cys108, Cys182, Cys186, and Cys189 each contribute to the [4Fe-4S] cluster site. Residues 168 to 397 (RASKVSSWVA…VALQERITEE (230 aa)) form the Radical SAM core domain. Residues 400-470 (KTFEGRDVEV…RHNLIADPNP (71 aa)) form the TRAM domain.

This sequence belongs to the methylthiotransferase family. MiaB subfamily. In terms of assembly, monomer. It depends on [4Fe-4S] cluster as a cofactor.

The protein localises to the cytoplasm. It catalyses the reaction N(6)-dimethylallyladenosine(37) in tRNA + (sulfur carrier)-SH + AH2 + 2 S-adenosyl-L-methionine = 2-methylsulfanyl-N(6)-dimethylallyladenosine(37) in tRNA + (sulfur carrier)-H + 5'-deoxyadenosine + L-methionine + A + S-adenosyl-L-homocysteine + 2 H(+). Functionally, catalyzes the methylthiolation of N6-(dimethylallyl)adenosine (i(6)A), leading to the formation of 2-methylthio-N6-(dimethylallyl)adenosine (ms(2)i(6)A) at position 37 in tRNAs that read codons beginning with uridine. The chain is tRNA-2-methylthio-N(6)-dimethylallyladenosine synthase from Bifidobacterium adolescentis (strain ATCC 15703 / DSM 20083 / NCTC 11814 / E194a).